The following is a 192-amino-acid chain: Protein GrpE (192 aa).

The interval 1 to 43 (MSKEEFPHEKDLKDEVTPDKAPKKDPKAASKEEVKEDPAKDYE) is disordered.

The protein belongs to the GrpE family. Homodimer.

It localises to the cytoplasm. Functionally, participates actively in the response to hyperosmotic and heat shock by preventing the aggregation of stress-denatured proteins, in association with DnaK and GrpE. It is the nucleotide exchange factor for DnaK and may function as a thermosensor. Unfolded proteins bind initially to DnaJ; upon interaction with the DnaJ-bound protein, DnaK hydrolyzes its bound ATP, resulting in the formation of a stable complex. GrpE releases ADP from DnaK; ATP binding to DnaK triggers the release of the substrate protein, thus completing the reaction cycle. Several rounds of ATP-dependent interactions between DnaJ, DnaK and GrpE are required for fully efficient folding. This chain is Protein GrpE, found in Lactobacillus gasseri (strain ATCC 33323 / DSM 20243 / BCRC 14619 / CIP 102991 / JCM 1131 / KCTC 3163 / NCIMB 11718 / NCTC 13722 / AM63).